We begin with the raw amino-acid sequence, 374 residues long: Tetraacyldisaccharide 4'-kinase (374 aa).

66–73 (TAGGTGKT) is an ATP binding site.

This sequence belongs to the LpxK family.

The catalysed reaction is a lipid A disaccharide + ATP = a lipid IVA + ADP + H(+). Its pathway is glycolipid biosynthesis; lipid IV(A) biosynthesis; lipid IV(A) from (3R)-3-hydroxytetradecanoyl-[acyl-carrier-protein] and UDP-N-acetyl-alpha-D-glucosamine: step 6/6. In terms of biological role, transfers the gamma-phosphate of ATP to the 4'-position of a tetraacyldisaccharide 1-phosphate intermediate (termed DS-1-P) to form tetraacyldisaccharide 1,4'-bis-phosphate (lipid IVA). The protein is Tetraacyldisaccharide 4'-kinase of Syntrophus aciditrophicus (strain SB).